Reading from the N-terminus, the 411-residue chain is Tetra-peptide repeat homeobox protein 1 (411 aa).

Residues Ser3 to Arg24 constitute a DNA-binding region (homeobox). Disordered regions lie at residues Leu20–Leu63, Ile88–Pro246, Pro286–Ala340, and Leu363–Leu411. The segment covering Gln27–Pro55 has biased composition (low complexity). 2 stretches are compositionally biased toward pro residues: residues Gly95–Ile139 and Phe149–Pro246. Low complexity predominate over residues Ser295 to Gly307. Positions Ala319–Pro335 are enriched in pro residues. Polar residues-rich tracts occupy residues Ser366 to Gln376 and Gly388 to His402.

Belongs to the paired homeobox family.

The protein localises to the nucleus. Its function is as follows. Transcription factor expressed after fertilization required for zygotic genome activation (ZGA), a critical event in early embryonic development during which the developmental control passes from maternally provided mRNAs to the expression of the zygotic genome after fertilization. Binds and activates expression of key ZGA marker genes, such as NANOGNB, ZSCAN4, DUXB, KLF5 and DPPA3. Binds to regulatory DNA sequences containing a 5'-TAATCC-3' sequence motif. The sequence is that of Tetra-peptide repeat homeobox protein 1 from Homo sapiens (Human).